The sequence spans 138 residues: Ribulose bisphosphate carboxylase small subunit (138 aa).

It belongs to the RuBisCO small chain family. Heterohexadecamer of 8 large and 8 small subunits.

Its subcellular location is the plastid. It is found in the chloroplast. Its function is as follows. RuBisCO catalyzes two reactions: the carboxylation of D-ribulose 1,5-bisphosphate, the primary event in carbon dioxide fixation, as well as the oxidative fragmentation of the pentose substrate in the photorespiration process. Both reactions occur simultaneously and in competition at the same active site. Although the small subunit is not catalytic it is essential for maximal activity. The chain is Ribulose bisphosphate carboxylase small subunit from Pyropia suborbiculata (Red alga).